The following is an 887-amino-acid chain: Autotaxin (887 aa).

An N-terminal signal peptide occupies residues 1-27 (MARQGCLGSFQVISLFTFAISVNICLG). Residues 28-35 (FTASRIKR) constitute a propeptide, removed by furin. Residue Asn53 is glycosylated (N-linked (GlcNAc...) asparagine). 2 consecutive SMB domains span residues 54–97 (TSGS…LKTA) and 98–142 (RGWE…GESH). Cystine bridges form between Cys58–Cys75, Cys62–Cys93, Cys73–Cys86, Cys79–Cys85, Cys102–Cys119, Cys107–Cys137, Cys117–Cys130, Cys123–Cys129, Cys148–Cys194, and Cys156–Cys350. The Cell attachment site signature appears at 126–128 (RGD). Positions 144–501 (VDDDCEEIKV…PTFKYRTKVP (358 aa)) are phosphodiesterase. Positions 171 and 209 each coordinate Zn(2+). Thr209 acts as the Nucleophile in catalysis. The 1-(9Z-octadecenoyl)-sn-glycero-3-phosphate site is built by Thr209, Asn230, and Asp311. The 1-hexadecanoyl-sn-glycero-3-phosphate site is built by Thr209, Asn230, and Asp311. Thr209, Asn230, and Asp311 together coordinate 1-tetradecanoyl-sn-glycerol 3-phosphate. Positions 311, 315, 358, and 359 each coordinate Zn(2+). Cystine bridges form between Cys366-Cys468, Cys413-Cys830, Cys566-Cys691, Cys568-Cys676, and Cys799-Cys809. 2 N-linked (GlcNAc...) asparagine glycosylation sites follow: Asn398 and Asn410. His474 lines the Zn(2+) pocket. His474 is a binding site for 1-(9Z-octadecenoyl)-sn-glycero-3-phosphate. His474 is a binding site for 1-hexadecanoyl-sn-glycero-3-phosphate. A 1-tetradecanoyl-sn-glycerol 3-phosphate-binding site is contributed by His474. Asn524 is a glycosylation site (N-linked (GlcNAc...) asparagine). Positions 586–607 (HTKGSTEAETGKFRGSKHENKK) are enriched in basic and acidic residues. The disordered stretch occupies residues 586-615 (HTKGSTEAETGKFRGSKHENKKNLNGSVEP). N-linked (GlcNAc...) asparagine glycosylation is present at Asn610. Positions 622–887 (LYGRPAVLYR…TYLHTYESEI (266 aa)) are nuclease-like domain. Residues Asp764, Asn766, Asp768, Leu770, and Asp772 each coordinate Ca(2+). An N-linked (GlcNAc...) asparagine glycan is attached at Asn831. The tract at residues 854–875 (IEHLTGLDFYRKTSRSYSEILT) is required for secretion.

It belongs to the nucleotide pyrophosphatase/phosphodiesterase family. Requires Zn(2+) as cofactor. Ca(2+) serves as cofactor. In terms of processing, N-glycosylation, but not furin-cleavage, plays a critical role on secretion and on lysoPLD activity. Post-translationally, the interdomain disulfide bond between Cys-413 and Cys-830 is essential for catalytic activity. Abundantly expressed in cerebrum and cerebellum. Localized in secretory epithelial cells in the brain and the eye including choroid plexus epithelial cells, ciliary epithelial cells, iris pigment epithelial cells, and retinal pigment cells.

The protein resides in the secreted. The enzyme catalyses a 1-O-alkyl-sn-glycero-3-phosphoethanolamine + H2O = a 1-O-alkyl-sn-glycero-3-phosphate + ethanolamine + H(+). It catalyses the reaction a 1-acyl-sn-glycero-3-phosphoethanolamine + H2O = a 1-acyl-sn-glycero-3-phosphate + ethanolamine + H(+). It carries out the reaction 1-(9Z-octadecenoyl)-sn-glycero-3-phosphoethanolamine + H2O = 1-(9Z-octadecenoyl)-sn-glycero-3-phosphate + ethanolamine + H(+). The catalysed reaction is a 1-O-alkyl-sn-glycero-3-phosphocholine + H2O = a 1-O-alkyl-sn-glycero-3-phosphate + choline + H(+). The enzyme catalyses 1-O-(9Z-octadecenyl)-sn-glycero-3-phosphocholine + H2O = 1-O-(9Z-octadecenyl)-sn-glycero-3-phosphate + choline + H(+). It catalyses the reaction 1-O-hexadecyl-sn-glycero-3-phosphocholine + H2O = 1-O-hexadecyl-sn-glycero-3-phosphate + choline + H(+). It carries out the reaction a 1-O-(1Z-alkenyl)-sn-glycero-3-phosphocholine + H2O = a 1-O-(1Z-alkenyl)-sn-glycero-3-phosphate + choline + H(+). The catalysed reaction is a 1-acyl-sn-glycero-3-phosphocholine + H2O = a 1-acyl-sn-glycero-3-phosphate + choline + H(+). The enzyme catalyses 1-dodecanoyl-sn-glycero-3-phosphocholine + H2O = 1-dodecanoyl-sn-glycerol 3-phosphate + choline + H(+). It catalyses the reaction 1-(9Z-octadecenoyl)-sn-glycero-3-phosphocholine + H2O = 1-(9Z-octadecenoyl)-sn-glycero-3-phosphate + choline + H(+). It carries out the reaction 1-tetradecanoyl-sn-glycero-3-phosphocholine + H2O = 1-tetradecanoyl-sn-glycerol 3-phosphate + choline + H(+). The catalysed reaction is 1-decanoyl-sn-glycero-3-phosphocholine + H2O = 1-decanoyl-sn-glycero-3-phosphate + choline + H(+). The enzyme catalyses 1-octadecanoyl-sn-glycero-3-phosphocholine + H2O = 1-octadecanoyl-sn-glycero-3-phosphate + choline + H(+). It catalyses the reaction 1-hexadecanoyl-sn-glycero-3-phosphocholine + H2O = 1-hexadecanoyl-sn-glycero-3-phosphate + choline + H(+). It carries out the reaction 1-hexanoyl-sn-glycero-3-phosphocholine + H2O = 1-hexanoyl-sn-glycero-3-phosphate + choline + H(+). The catalysed reaction is 1-(9Z,12Z)-octadecadienoyl-sn-glycero-3-phosphocholine + H2O = 1-(9Z,12Z)-octadecadienoyl-sn-glycero-3-phosphate + choline + H(+). The enzyme catalyses sphing-4-enine-phosphocholine + H2O = sphing-4-enine 1-phosphate + choline + H(+). It catalyses the reaction 1-(5Z,8Z,11Z,14Z-eicosatetraenoyl)-sn-glycero-3-phosphocholine + H2O = 1-(5Z,8Z,11Z,14Z-eicosatetraenoyl)-sn-glycero-3-phosphate + choline + H(+). It carries out the reaction a 2-acyl-sn-glycero-3-phosphocholine + H2O = a 2-acyl-sn-glycerol 3-phosphate + choline + H(+). The catalysed reaction is a 1,2-diacyl-sn-glycero-3-phosphocholine + H2O = a 1,2-diacyl-sn-glycero-3-phosphate + choline + H(+). The enzyme catalyses 1,2-dioctanoyl-sn-glycero-3-phosphocholine + H2O = 1,2-dioctanoyl-sn-glycero-3-phosphate + choline + H(+). It catalyses the reaction 1,2-didecanoyl-sn-glycero-3-phosphocholine + H2O = 1,2-didecanoyl-sn-glycero-3-phosphate + choline + H(+). It carries out the reaction a 1-acyl-sn-glycero-3-phospho-L-serine + H2O = a 1-acyl-sn-glycero-3-phosphate + L-serine + H(+). The catalysed reaction is 1-(9Z-octadecenoyl)-sn-glycero-3-phospho-L-serine + H2O = 1-(9Z-octadecenoyl)-sn-glycero-3-phosphate + L-serine + H(+). The enzyme catalyses a 2-acyl-sn-glycero-3-phospho-L-serine + H2O = a 2-acyl-sn-glycerol 3-phosphate + L-serine + H(+). Its activity is regulated as follows. Inhibited by vanadate. Inhibited by micromolar levels of bile salts, such as tauroursodeoxycholate. Not inhibited by taurodeoxycholate. Not inhibited by hydroxysterols, such as 7-hydroxycholesterol, testosterone, dexamethasone and prednisolone. Inhibited by EDTA and EGTA. Secreted lysophospholipase D that hydrolyzes lysophospholipids to produce the signaling molecule lysophosphatidic acid (LPA) in extracellular fluids. Its major substrate is lysophosphatidylcholine. Can also act on sphingosylphosphorylcholine producing sphingosine-1-phosphate, a modulator of cell motility. Can hydrolyze, in vitro, bis-pNPP, to some extent pNP-TMP, and barely ATP. Involved in several motility-related processes such as angiogenesis and neurite outgrowth. Acts as an angiogenic factor by stimulating migration of smooth muscle cells and microtubule formation. Stimulates migration of melanoma cells, probably via a pertussis toxin-sensitive G protein. May have a role in induction of parturition. Possible involvement in cell proliferation and adipose tissue development. Required for LPA production in activated platelets, cleaves the sn-1 lysophospholipids to generate sn-1 lysophosphatidic acids containing predominantly 18:2 and 20:4 fatty acids. Shows a preference for the sn-1 to the sn-2 isomer of 1-O-alkyl-sn-glycero-3-phosphocholine (lyso-PAF). This Rattus norvegicus (Rat) protein is Autotaxin.